The following is a 668-amino-acid chain: BTB/POZ domain-containing protein At5g66560 (668 aa).

The BTB domain occupies 21–133 (SDIEIEVDDM…CYGVKMDLSA (113 aa)). Residues 73 to 84 (ETDKKGKGHEIE) show a composition bias toward basic and acidic residues. The interval 73–98 (ETDKKGKGHEIEDDKEEEEVEEQEIE) is disordered. Acidic residues predominate over residues 85-98 (DDKEEEEVEEQEIE). The 277-residue stretch at 254 to 530 (ELWFEDLTQL…VQVLFFEQLQ (277 aa)) folds into the NPH3 domain. A Phosphotyrosine modification is found at Y471.

Belongs to the NPH3 family.

The protein operates within protein modification; protein ubiquitination. Its function is as follows. May act as a substrate-specific adapter of an E3 ubiquitin-protein ligase complex (CUL3-RBX1-BTB) which mediates the ubiquitination and subsequent proteasomal degradation of target proteins. The polypeptide is BTB/POZ domain-containing protein At5g66560 (Arabidopsis thaliana (Mouse-ear cress)).